The sequence spans 631 residues: Phosphomethylpyrimidine synthase (631 aa).

Residues Asn-239, Met-268, Tyr-297, His-333, 353–355 (SRG), 394–397 (DGLR), and Glu-433 each bind substrate. His-437 contacts Zn(2+). Tyr-460 serves as a coordination point for substrate. Residue His-501 coordinates Zn(2+). Residues Cys-581, Cys-584, and Cys-589 each contribute to the [4Fe-4S] cluster site.

Belongs to the ThiC family. Homodimer. The cofactor is [4Fe-4S] cluster.

The catalysed reaction is 5-amino-1-(5-phospho-beta-D-ribosyl)imidazole + S-adenosyl-L-methionine = 4-amino-2-methyl-5-(phosphooxymethyl)pyrimidine + CO + 5'-deoxyadenosine + formate + L-methionine + 3 H(+). It participates in cofactor biosynthesis; thiamine diphosphate biosynthesis. Its function is as follows. Catalyzes the synthesis of the hydroxymethylpyrimidine phosphate (HMP-P) moiety of thiamine from aminoimidazole ribotide (AIR) in a radical S-adenosyl-L-methionine (SAM)-dependent reaction. The protein is Phosphomethylpyrimidine synthase of Escherichia coli O7:K1 (strain IAI39 / ExPEC).